The following is a 515-amino-acid chain: MDEFHRCGKEDSFWQQCFLYPLFFQEDLYAISHDHYLDVSSSSRPMEHLSSNDQLSFLTVKRLIGQIRQQNHSIVLFVNCDPNPLADRKKSFYSESVLEALTLVLEVPFSIWSKSSVEGMNECKSFRSIHSIFPFLEDKFPHSNSILDARIPYSIHPEILVRTFRRWIRDAPSLHPLRSVLYDYRNSPENLQRSIIVVPRVNTRFFLFLLNYYVWECESILFSRLKRSSHSRSLSHGSFPQRTHFHRKIKHIIIFSRRNSLKSIWSLKDPKIHYVRYGERPIIAIKGADLLVKKCRYYLLIFRQFYFHLWSEPYRVCSHQLSKNCSSSLGYFLRVRMNPLLVRTKTLDELFIPVLITNEMDPIVPIVPIIGLLATEKFCDISGRPISKLSWTSLTDDDILDRFDQIWRNLFHYYSGSFDRDGLYRIKYILLLSCAKTLACKHKSTIRVVRKELGPELFKKSFSKEREFDSLPFSSKAAARSQRERIWHSDIPQINPLANSWQKIQDLKIENLFDQ.

Belongs to the intron maturase 2 family. MatK subfamily.

Its subcellular location is the plastid. It is found in the chloroplast. Its function is as follows. Usually encoded in the trnK tRNA gene intron. Probably assists in splicing its own and other chloroplast group II introns. The protein is Maturase K of Pinus tabuliformis (Chinese red pine).